The following is a 1190-amino-acid chain: MKNRTFATIDGNEAVAQVVYQINEVIAIYPITPSSPMAEWSDAWASEGKPNIWGTVPTVVQMQSEGGVAGAVHGALQTGSLTTTFTASQGLLLMIPNMYKIAGELTPTVFHIAARSLAAQALSIFGDHSDVMATRGTGFAMLCAASVQEAHDFALISTRITLESRIPFLHFFDGFRTSHEINKIELLTTEDFKGFIPNELVIAHRSRALTPDKPVLRGTAQNPDVYFQARETVNPYYLACPEITQKVMDEFAQMTGRQYQLFEYHGDPTAERVIILMGSGCETVHETVDYLNALGEKVGVIKVRLYQPFDSQRFIAALPTTTRGIAVLDRTKEPGASGEPLYLDVVTALYEKWGVGSLPTVIGGRYGLSSKEFTPGMVKAVFDNLAATIPKNHFTIGINDDVSHTSLDYDPDFNIEPDNIVRAIFYGLGADGTVGANKNSIKIIGEETNNYAQGYFVYDSKKSGSVTVSHLRFGSQLIRSTYLINKASFVACHQWDFLEKFPILKDIVQGGTFLLNSPYDQDEVWERLPGKIQAQIQQKQLKVYVINAYKVAREAGMAGRINTVMQVCFFALSNVLPREEAIAEIKKYIRKTYGKKGDQIVQMNIKAVDTTLDNLHELVTREYSAPPQIPNHHYPLSPEGAPPSSIPYILGKMIAREGDELPVSALPNDGTYPTGTAKWEKRNIAQEIPVWDTDVCIQCGKCVMVCPHSVIRSKVYEPEQLENAPSTFKSANAKDHDWHGLKFTIQVAAEDCTGCGICVDVCPAKNKAQPRKKAINMEPQLPLRQAERENWDFFLSIPNPDRRELKLTHINQQQMQEPLFEFSGACAGCGETPYIKLGTQLFGDRMIVANATGCSSIYGGNLPTTPWTQNAAGRGPAWSNSLFEDNAEFGLGFRVSIDKQTEIASQLLQELATVVGRELVDDILNNQQNNEAEIWEQRDRISILKQKLQALVNPELTSKAQLLLSLADYLVKKSVWIIGGDGWAYDIGYGGLDHVLASGRNVNILVLDTEVYSNTGGQMSKATPKGAVAKFASGGKPAAKKDLGLMAMTYGNVYVASVAMGAKDEHTLKAFLEAEAYSGTSLIIAYSHCIAHGINLSTAMQNQKAAVDSGRWLLYRYHPDLVKQGKNPLQLDSRTPKLPLEESMYLENRFKMLTKINPEVAKELLKEAQTDVNLRWQMYQYLAAREVTQG.

4Fe-4S ferredoxin-type domains are found at residues 687 to 716 and 743 to 773; these read EIPV…SKVY and FTIQ…PRKK. Residues C696, C699, C702, C706, C752, C755, C758, C762, C826, C829, C854, and C1089 each coordinate [4Fe-4S] cluster.

This sequence belongs to the pyruvate:ferredoxin/flavodoxin oxidoreductase family. The cofactor is [4Fe-4S] cluster.

It catalyses the reaction oxidized [flavodoxin] + pyruvate + CoA + 2 H(+) = reduced [flavodoxin] + acetyl-CoA + CO2. Its function is as follows. Oxidoreductase required for the transfer of electrons from pyruvate to flavodoxin, which reduces nitrogenase. In Trichormus variabilis (strain ATCC 29413 / PCC 7937) (Anabaena variabilis), this protein is Pyruvate-flavodoxin oxidoreductase (nifJ).